A 274-amino-acid polypeptide reads, in one-letter code: Guanylyl cyclase 1 (274 aa).

In terms of assembly, functions both as monomer and homooligomer. Mg(2+) serves as cofactor.

The enzyme catalyses GTP = 3',5'-cyclic GMP + diphosphate. The protein operates within nucleotide metabolism. Magnesium-dependent guanylyl cyclase that catalyzes the formation of guanosine 3',5'-cyclic monophosphate (cGMP) from guanosine 5'-triphosphate (GTP). Can also use ATP as substrate with a low activity. This Arabidopsis thaliana (Mouse-ear cress) protein is Guanylyl cyclase 1.